We begin with the raw amino-acid sequence, 340 residues long: Entry-fusion complex protein OPG094 (340 aa).

Residues M1 to T20 are disordered. G2 carries N-myristoyl glycine; by host lipidation. Topologically, residues G2–D319 are virion surface. A helical; Signal-anchor for type II membrane protein transmembrane segment spans residues L320 to I340.

It belongs to the orthopoxvirus OPG086 family. Interacts with OPG143. Component of the entry fusion complex (EFC) composed of OPG053, OPG076, OPG086, OPG094, OPG095, OPG099, OPG107, OPG143, OPG104, OPG147 and OPG155. Except for OPG095 and OPG053, each of the EFC proteins is required for assembly or stability of the complex. Unglycosylated because produced in viral factories instead of the classic ER -Golgi route.

It is found in the virion membrane. Functionally, component of the entry fusion complex (EFC), which consists of 11 proteins. During cell infection, this complex mediates entry of the virion core into the host cytoplasm by a two-step mechanism consisting of lipid mixing of the viral and cellular membranes and subsequent pore formation. The chain is Entry-fusion complex protein OPG094 (OPG094) from Vaccinia virus (strain Copenhagen) (VACV).